The following is a 316-amino-acid chain: Arginine transport system permease protein ArgU (316 aa).

The segment covering 1–14 (MSDLNQGPGASTAQ) has biased composition (polar residues). The interval 1–20 (MSDLNQGPGASTAQPKPIEA) is disordered. Transmembrane regions (helical) follow at residues 29 to 49 (WVAA…ALNN), 74 to 94 (IALT…LAVM), 108 to 128 (LYLW…WGLL), 151 to 171 (MFLL…AEIV), 217 to 237 (LISM…LELY), and 251 to 271 (VPML…LMVG). Residues 70–274 (ALHTIALTLL…TSILMVGQYY (205 aa)) enclose the ABC transmembrane type-1 domain.

Belongs to the binding-protein-dependent transport system permease family. As to quaternary structure, the complex is probably composed of two ATP-binding proteins (ArgV), two transmembrane proteins (ArgU) and a solute-binding protein (ArgT).

The protein resides in the cell membrane. Functionally, part of the ABC transporter complex ArgTUV involved in L-arginine import. May also transport L-citrulline. Probably responsible for the translocation of the substrate across the membrane. This is Arginine transport system permease protein ArgU from Corynebacterium glutamicum (strain ATCC 13032 / DSM 20300 / JCM 1318 / BCRC 11384 / CCUG 27702 / LMG 3730 / NBRC 12168 / NCIMB 10025 / NRRL B-2784 / 534).